An 862-amino-acid chain; its full sequence is Squamosa promoter-binding-like protein 1 (862 aa).

A disordered region spans residues 55 to 98 (KRRRVSPEDDDGEECINAATTNGDDGQISGQRGRSSEDEMPRQG). Residues 72-87 (AATTNGDDGQISGQRG) show a composition bias toward polar residues. The SBP-type zinc-finger motif lies at 104–181 (GPCCQVDGCT…AQHNRRRRKV (78 aa)). Cysteine 107, cysteine 112, cysteine 129, histidine 132, cysteine 148, cysteine 151, histidine 155, and cysteine 167 together coordinate Zn(2+). The Bipartite nuclear localization signal motif lies at 164 to 180 (KKSCRSRLAQHNRRRRK).

In terms of tissue distribution, ubiquitous.

The protein resides in the nucleus. Trans-acting factor that binds specifically to the consensus nucleotide sequence 5'-TNCGTACAA-3'. The sequence is that of Squamosa promoter-binding-like protein 1 (SPL1) from Oryza sativa subsp. japonica (Rice).